The primary structure comprises 397 residues: Acetate kinase 2 (397 aa).

Position 10 (N10) interacts with Mg(2+). An ATP-binding site is contributed by K17. R90 contacts substrate. The active-site Proton donor/acceptor is the D147. Residues 207-211 (HLGNG), 281-283 (DAR), and 329-333 (GIGEN) each bind ATP. E385 is a Mg(2+) binding site.

Belongs to the acetokinase family. In terms of assembly, homodimer. The cofactor is Mg(2+). Mn(2+) serves as cofactor.

The protein localises to the cytoplasm. It carries out the reaction acetate + ATP = acetyl phosphate + ADP. Its pathway is metabolic intermediate biosynthesis; acetyl-CoA biosynthesis; acetyl-CoA from acetate: step 1/2. Functionally, catalyzes the formation of acetyl phosphate from acetate and ATP. Can also catalyze the reverse reaction. The polypeptide is Acetate kinase 2 (Vibrio vulnificus (strain CMCP6)).